The sequence spans 779 residues: Membrane metallo-endopeptidase-like 1 (779 aa).

Residues 1–27 are Cytoplasmic-facing; the sequence is MGKSEGPVGMVESAGRAGQKRPGFLEG. The helical; Signal-anchor for type II membrane protein transmembrane segment at 28 to 48 threads the bilayer; the sequence is GLLLLLLLVTAALVALGVLYA. Residues 49-779 are Lumenal-facing; it reads DRRGKQLPRL…MHPKERCRVW (731 aa). Residues 88–779 enclose the Peptidase M13 domain; the sequence is VCTTPGCVIA…MHPKERCRVW (692 aa). Disulfide bonds link cysteine 89-cysteine 94, cysteine 112-cysteine 764, cysteine 120-cysteine 724, cysteine 175-cysteine 439, and cysteine 650-cysteine 776. Arginine 135 contacts a peptide. 4 N-linked (GlcNAc...) asparagine glycosylation sites follow: asparagine 177, asparagine 207, asparagine 350, and asparagine 530. A coiled-coil region spans residues 515-560; the sequence is LEEMNRRLDEEYSNLNFSEDLYFENSLQNLKVGAQRSLRKLREKVD. Histidine 613 lines the Zn(2+) pocket. Residue glutamate 614 is part of the active site. Histidine 617 lines the Zn(2+) pocket. N-linked (GlcNAc...) asparagine glycosylation occurs at asparagine 657. Residue glutamate 676 participates in Zn(2+) binding. Aspartate 680 acts as the Proton donor in catalysis.

The protein belongs to the peptidase M13 family. Requires Zn(2+) as cofactor. In terms of processing, N-glycosylated. As to expression, predominantly expressed in testis. Weakly expressed in brain, kidney and heart.

It is found in the membrane. The protein resides in the secreted. It carries out the reaction Preferential cleavage of polypeptides between hydrophobic residues, particularly with Phe or Tyr at P1'.. Its activity is regulated as follows. Inhibited by thiorphan and phosphoramidon. Metalloprotease involved in sperm function, possibly by modulating the processes of fertilization and early embryonic development. Degrades a broad variety of small peptides with a preference for peptides shorter than 3 kDa containing neutral bulky aliphatic or aromatic amino acid residues. Shares the same substrate specificity with MME and cleaves peptides at the same amide bond. This is Membrane metallo-endopeptidase-like 1 (MMEL1) from Homo sapiens (Human).